The sequence spans 410 residues: Polyprenol-phosphate-mannose-dependent alpha-(1-2)-phosphatidylinositol pentamannoside mannosyltransferase (410 aa).

10 helical membrane passes run 31 to 51 (LAPMLLVVSILARLAWTYLVP), 96 to 116 (FAAIVFYPLHLLPFGVVAFIW), 160 to 180 (TFDYGQVNVVLVLAVLCAVST), 188 to 208 (LLVGLAAGIKLTPAVAGLYFL), 214 to 234 (AAVACSAAVFFATVGVSWLVV), 276 to 296 (GFGPLVLIGIGITAVLALLAW), 306 to 326 (LGGILVVSLFGLVLSPISWTH), 328 to 348 (WVWLIPLMMWLLHGPLSALRG), 351 to 371 (ILGWGWLALTLLGVPWLLSFA), and 384 to 404 (LAWAGLVYIVATLATLGWIAF).

It belongs to the glycosyltransferase 87 family.

The protein localises to the cell membrane. The protein operates within phospholipid metabolism; phosphatidylinositol metabolism. Catalyzes the alpha-1,2 addition of a mannose residue from polyprenol-phosphate-mannose (PPM) to a monoacyl phosphatidylinositol tetramannoside (AcPIM4) to generate a monoacyl phosphatidylinositol pentamannoside (AcPIM5). The chain is Polyprenol-phosphate-mannose-dependent alpha-(1-2)-phosphatidylinositol pentamannoside mannosyltransferase from Mycolicibacterium smegmatis (strain ATCC 700084 / mc(2)155) (Mycobacterium smegmatis).